Here is a 2109-residue protein sequence, read N- to C-terminus: Nonribosomal peptide synthetase sidE (2109 aa).

Residues 31 to 512 are adenylation 1; sequence LTPPSPPCLV…QNGKVDFRAI (482 aa). A Carrier 1 domain is found at 537-613; it reads AGLSETASKI…EIADTVQLDS (77 aa). Residue S574 is modified to O-(pantetheine 4'-phosphoryl)serine. The condensation 1 stretch occupies residues 646–908; that stretch reads DAYPVTALQE…LAVVPYAIAI (263 aa). The segment at 1058–1555 is adenylation 2; the sequence is RTLNGQFEAT…GKANRKQLKA (498 aa). Positions 1584–1660 constitute a Carrier 2 domain; it reads PLASETQKVL…AMADQLKGES (77 aa). S1621 carries the O-(pantetheine 4'-phosphoryl)serine modification. Residues 1695–1968 form a condensation 2 region; sequence YPCPPGQAEF…NFLPMRSKVD (274 aa).

Belongs to the NRP synthetase family.

Its pathway is siderophore biosynthesis. Its function is as follows. Nonribosomal peptide synthetase; part of the siderophore biosynthetic pathway. Aspergillus fumigatus produces four types of siderophores, low-molecular-mass iron chelators, including excreted fusarinine C (FsC) and triacetylfusarinine C (TAFC) for iron uptake and intacellular ferricrocin (FC) for hyphal and hydroxyferricrocin (HFC) for conidial iron distribution and storage. TAFC consists of three N(2)-acetyl-N(5)-anhydromevalonyl-N(5)-hydroxyornithine residues cyclically linked by ester bonds; FC is a cyclic hexapeptide with the structure Gly-Ser-Gly-(N(5)-acetyl-N(5)-hydroxyornithine)x3. The biosynthesis of all four siderophores depends on the hydroxylation of ornithine, catalyzed by the monooxygenase sidA. Subsequently, the pathways for biosynthesis of extra- and intracellular siderophores split. For biosynthesis of extracellular siderophores, the transacylase sidF transfers anhydromevalonyl to N(5)-hydroxyornithine. The required anhydromevalonyl-CoA moiety is derived from mevalonate by CoA ligation and dehydration catalyzed by sidI and sidH respectively. The acetylation of N(5)-hydroxyornithine for FC biosynthesis involves the constitutively expressed sidL. FC is hydroxylated to HFC by an as yet uncharacterized enzyme during conidiation. Assembly of fusarinine C (FsC) and FC is catalyzed by two different nonribosomal peptide synthetases (NRPS), sidD and sidC respectively. Subsequently, sidG catalyzes N2-acetylation of FsC for forming TAFC. Both extra- and intracellular siderophores are crucial for growth during iron limitation and virulence. The chain is Nonribosomal peptide synthetase sidE from Aspergillus fumigatus (strain ATCC MYA-4609 / CBS 101355 / FGSC A1100 / Af293) (Neosartorya fumigata).